The primary structure comprises 102 residues: Small ubiquitin-related modifier 1-A (102 aa).

The interval 1–20 (MSDQEAKPSSEDLGDKKDGG) is disordered. Positions 21–98 (DYIKLKVIGQ…IEVYQEQTGG (78 aa)) constitute a Ubiquitin-like domain. Glycine 98 participates in a covalent cross-link: Glycyl lysine isopeptide (Gly-Lys) (interchain with K-? in acceptor proteins). Positions 99-102 (HSTF) are excised as a propeptide.

This sequence belongs to the ubiquitin family. SUMO subfamily. As to quaternary structure, interacts with sae2, ube2i, ranbp2, pias1 and pias2. Covalently attached to a number of proteins including rangap1 and ranbp2. Interacts with sox9 and sox10. Cleavage of precursor form by a sentrin-specific protease is necessary for function.

Its subcellular location is the nucleus membrane. It localises to the nucleus speckle. It is found in the cytoplasm. The protein resides in the nucleus. The protein localises to the PML body. Its subcellular location is the cell membrane. In terms of biological role, ubiquitin-like protein that can be covalently attached to proteins as a monomer or a lysine-linked polymer. Covalent attachment via an isopeptide bond to its substrates requires prior activation by the E1 complex sae1-sae2 and linkage to the E2 enzyme ube2i. This post-translational modification on lysine residues of proteins plays a crucial role in a number of cellular processes such as nuclear transport, DNA replication and repair, mitosis and signal transduction. Polymeric sumo1 chains are also susceptible to polyubiquitination which functions as a signal for proteasomal degradation of modified proteins. The polypeptide is Small ubiquitin-related modifier 1-A (sumo1-a) (Xenopus laevis (African clawed frog)).